The following is a 232-amino-acid chain: Putative homeobox protein NANOG2 (232 aa).

The tract at residues 1 to 39 (MDLPIQDSHDSSTSPKGKQPTTAEKSATKKEDKVPVKKQ) is disordered. Residues 11–25 (SSTSPKGKQPTTAEK) are compositionally biased toward polar residues. The segment covering 26 to 35 (SATKKEDKVP) has biased composition (basic and acidic residues). A run of 8 repeats spans residues 123 to 127 (WSNQT), 128 to 132 (WNNST), 133 to 137 (WSNQT), 143 to 147 (WSNHS), 148 to 152 (WNTQT), 153 to 157 (WCTQS), 158 to 162 (WNNQA), and 163 to 167 (WNSPF). Positions 123-167 (WSNQTWNNSTWSNQTQNIQSWSNHSWNTQTWCTQSWNNQAWNSPF) are 8 X repeats starting with a Trp in each unit. Residues 123–167 (WSNQTWNNSTWSNQTQNIQSWSNHSWNTQTWCTQSWNNQAWNSPF) form a sufficient for transactivation activity region. Positions 168–232 (YNCGEESLQS…YSMNMQPEDV (65 aa)) are sufficient for strong transactivation activity.

Belongs to the Nanog homeobox family.

It is found in the nucleus. In terms of biological role, probable transcriptional regulator. The polypeptide is Putative homeobox protein NANOG2 (NANOGP1) (Homo sapiens (Human)).